The chain runs to 283 residues: Phosphatidylserine decarboxylase proenzyme (283 aa).

Residues aspartate 88, histidine 145, and serine 248 each act as charge relay system; for autoendoproteolytic cleavage activity in the active site. The active-site Schiff-base intermediate with substrate; via pyruvic acid; for decarboxylase activity is serine 248. A Pyruvic acid (Ser); by autocatalysis modification is found at serine 248.

This sequence belongs to the phosphatidylserine decarboxylase family. PSD-B subfamily. Prokaryotic type I sub-subfamily. Heterodimer of a large membrane-associated beta subunit and a small pyruvoyl-containing alpha subunit. It depends on pyruvate as a cofactor. In terms of processing, is synthesized initially as an inactive proenzyme. Formation of the active enzyme involves a self-maturation process in which the active site pyruvoyl group is generated from an internal serine residue via an autocatalytic post-translational modification. Two non-identical subunits are generated from the proenzyme in this reaction, and the pyruvate is formed at the N-terminus of the alpha chain, which is derived from the carboxyl end of the proenzyme. The autoendoproteolytic cleavage occurs by a canonical serine protease mechanism, in which the side chain hydroxyl group of the serine supplies its oxygen atom to form the C-terminus of the beta chain, while the remainder of the serine residue undergoes an oxidative deamination to produce ammonia and the pyruvoyl prosthetic group on the alpha chain. During this reaction, the Ser that is part of the protease active site of the proenzyme becomes the pyruvoyl prosthetic group, which constitutes an essential element of the active site of the mature decarboxylase.

Its subcellular location is the cell membrane. The enzyme catalyses a 1,2-diacyl-sn-glycero-3-phospho-L-serine + H(+) = a 1,2-diacyl-sn-glycero-3-phosphoethanolamine + CO2. The protein operates within phospholipid metabolism; phosphatidylethanolamine biosynthesis; phosphatidylethanolamine from CDP-diacylglycerol: step 2/2. Functionally, catalyzes the formation of phosphatidylethanolamine (PtdEtn) from phosphatidylserine (PtdSer). In Variovorax paradoxus (strain S110), this protein is Phosphatidylserine decarboxylase proenzyme.